The sequence spans 552 residues: MFS-type transporter atr4 (552 aa).

The tract at residues M1–D102 is disordered. Residues A16–A27 are compositionally biased toward low complexity. Polar residues-rich tracts occupy residues K38–T47 and L71–N80. A glycan (N-linked (GlcNAc...) asparagine) is linked at N73. 6 helical membrane-spanning segments follow: residues I118–G138, L153–A173, M182–G202, L214–I234, G244–L264, and W272–M292. A glycan (N-linked (GlcNAc...) asparagine) is linked at N314. Transmembrane regions (helical) follow at residues P346–F366, G385–F405, L425–S445, W452–C472, V498–W518, and S521–G541.

It belongs to the major facilitator superfamily.

It localises to the cell membrane. In terms of biological role, MFS-type transporter; part of the gene cluster that mediates the biosynthesis of atranorin, a depside of polyketide origin that accumulates in the cortical or medullary layers of lichen thalli. The protein is MFS-type transporter atr4 of Stereocaulon alpinum (Alpine snow lichen).